A 454-amino-acid chain; its full sequence is Ribosomal protein uS12 methylthiotransferase RimO (454 aa).

Residues 14 to 125 enclose the MTTase N-terminal domain; the sequence is SKVAFSHVGC…IAKVLDRVEQ (112 aa). [4Fe-4S] cluster contacts are provided by Cys23, Cys59, Cys88, Cys163, Cys167, and Cys170. Positions 149-378 constitute a Radical SAM core domain; that stretch reads DKNKFVAYLR…ISVQQNISKD (230 aa). Positions 381 to 452 constitute a TRAM domain; sequence QTYVGSKMKI…EYDLYGEIIK (72 aa).

The protein belongs to the methylthiotransferase family. RimO subfamily. It depends on [4Fe-4S] cluster as a cofactor.

The protein localises to the cytoplasm. The enzyme catalyses L-aspartate(89)-[ribosomal protein uS12]-hydrogen + (sulfur carrier)-SH + AH2 + 2 S-adenosyl-L-methionine = 3-methylsulfanyl-L-aspartate(89)-[ribosomal protein uS12]-hydrogen + (sulfur carrier)-H + 5'-deoxyadenosine + L-methionine + A + S-adenosyl-L-homocysteine + 2 H(+). In terms of biological role, catalyzes the methylthiolation of an aspartic acid residue of ribosomal protein uS12. The polypeptide is Ribosomal protein uS12 methylthiotransferase RimO (Prochlorococcus marinus (strain AS9601)).